We begin with the raw amino-acid sequence, 240 residues long: MGGCVGRPQGESQRSQSRASGQQRKRAGRNEPLKKERPRWKSDYPMTDGQLRSKRDEFWDTAPAFEGRKEIWDALKAAAFAVEANDHELAQAIVDGASITLPHGSLTECYDELGTRYQLPVYCLAPPVNLIMERSEEDGTDALEPAPNTRREFQLKVRLSTGKDVKLNASMVDTIGQLKKQLHAVEGIEPCWQRWFFFWEASHRQNEAPGDEDPERLRDTSYCKPATRDTKLNWHNAQQI.

The segment at 1–48 (MGGCVGRPQGESQRSQSRASGQQRKRAGRNEPLKKERPRWKSDYPMTD) is disordered. Positions 12 to 22 (SQRSQSRASGQ) are enriched in low complexity. Positions 28 to 42 (GRNEPLKKERPRWKS) are enriched in basic and acidic residues. Residues 153-228 (FQLKVRLSTG…DTSYCKPATR (76 aa)) enclose the Ubiquitin-like domain.

In terms of biological role, may be involved in the regulation of cellular senescence through a positive feedback loop with TP53. The protein is Ubiquitin domain-containing protein 1 (ubtd1) of Xenopus tropicalis (Western clawed frog).